The primary structure comprises 245 residues: Myelin protein P0 (245 aa).

Positions 1–28 are cleaved as a signal peptide; that stretch reads MEPSGLRTPCSLLALVLLSALVLTPTLA. Residues 29 to 143 enclose the Ig-like V-type domain; that stretch reads IEVYTDREVY…VGKSSYVHLQ (115 aa). The Extracellular segment spans residues 29–153; sequence IEVYTDREVY…VQEKGPARAG (125 aa). A disulfide bridge links cysteine 49 with cysteine 125. Asparagine 120 carries an N-linked (GlcNAc...) asparagine glycan. The chain crosses the membrane as a helical span at residues 154–174; the sequence is LILGIIIAVALALVIVVTILI. The Cytoplasmic segment spans residues 175–245; sequence LLIRYCWLRR…GIGDSRKDRK (71 aa). Basic and acidic residues-rich tracts occupy residues 199 to 208 and 224 to 245; these read KLHKAKDSSK and TRGKSSEKKAKGGIGDSRKDRK. The disordered stretch occupies residues 199-245; the sequence is KLHKAKDSSKRSSRQTPILYAMLDQTRGKSSEKKAKGGIGDSRKDRK.

This sequence belongs to the myelin P0 protein family.

The protein resides in the cell membrane. Its function is as follows. Creation of an extracellular membrane face which guides the wrapping process and ultimately compacts adjacent lamellae. This is Myelin protein P0 (mpz) from Xenopus laevis (African clawed frog).